A 453-amino-acid polypeptide reads, in one-letter code: Carbamoyl phosphate synthase arginine-specific small chain (453 aa).

Residues 1–28 constitute a mitochondrion transit peptide; the sequence is MFARVFKAMPARASALTSVNASIPARFM. In terms of domain architecture, Glutamine amidotransferase type-1 spans 219 to 406; it reads HVAVIDCGVK…IDSVKKYKAS (188 aa). C295 serves as the catalytic Nucleophile. Active-site residues include H379 and E381.

The protein belongs to the CarA family. In terms of assembly, heterodimer composed of 2 chains; the small (or glutamine) chain promotes the hydrolysis of glutamine to ammonia, which is used by the large (or ammonia) chain to synthesize carbamoyl phosphate.

It localises to the mitochondrion matrix. The enzyme catalyses hydrogencarbonate + L-glutamine + 2 ATP + H2O = carbamoyl phosphate + L-glutamate + 2 ADP + phosphate + 2 H(+). It carries out the reaction L-glutamine + H2O = L-glutamate + NH4(+). It functions in the pathway amino-acid biosynthesis; L-arginine biosynthesis; carbamoyl phosphate from bicarbonate: step 1/1. Small subunit of the arginine-specific carbamoyl phosphate synthase (CPSase). CPSase catalyzes the formation of carbamoyl phosphate from the ammonia moiety of glutamine, carbonate, and phosphate donated by ATP, the first step of the arginine biosynthetic pathway. The small subunit (glutamine amidotransferase) binds and cleaves glutamine to supply the large subunit with the substrate ammonia. In Aspergillus fumigatus (strain ATCC MYA-4609 / CBS 101355 / FGSC A1100 / Af293) (Neosartorya fumigata), this protein is Carbamoyl phosphate synthase arginine-specific small chain (cpa1).